The chain runs to 334 residues: Geranylgeranyl pyrophosphate synthase ltmG (334 aa).

Residues K53, R56, and H85 each coordinate isopentenyl diphosphate. Mg(2+)-binding residues include D92 and D96. Residue R101 participates in dimethylallyl diphosphate binding. Isopentenyl diphosphate is bound at residue R102. Positions 179, 180, and 213 each coordinate dimethylallyl diphosphate. D216 serves as a coordination point for Mg(2+). Positions 220, 230, and 240 each coordinate dimethylallyl diphosphate.

It belongs to the FPP/GGPP synthase family. It depends on Mg(2+) as a cofactor.

The catalysed reaction is isopentenyl diphosphate + dimethylallyl diphosphate = (2E)-geranyl diphosphate + diphosphate. It catalyses the reaction isopentenyl diphosphate + (2E)-geranyl diphosphate = (2E,6E)-farnesyl diphosphate + diphosphate. It carries out the reaction isopentenyl diphosphate + (2E,6E)-farnesyl diphosphate = (2E,6E,10E)-geranylgeranyl diphosphate + diphosphate. Its pathway is secondary metabolite biosynthesis. Its function is as follows. Geranylgeranyl pyrophosphate synthase; part of the gene cluster that mediates the biosynthesis of lolitrems, indole-diterpene mycotoxins that are potent tremorgens in mammals, and are synthesized by clavicipitaceous fungal endophytes in association with their grass hosts. The geranylgeranyl diphosphate (GGPP) synthase ltmG is proposed to catalyze the first step in lolitrem biosynthesis. LtmG catalyzes a series of iterative condensations of isopentenyl diphosphate (IPP) with dimethylallyl diphosphate (DMAPP), geranyl diphosphate (GPP), and farnesyl diphosphate (FPP), to form GGPP. GGPP then condenses with indole-3-glycerol phosphate to form 3-geranylgeranylindole, an acyclic intermediate, to be incorporated into paxilline. Either ltmG or ltmC could be responsible for this step, as both are putative prenyl transferases. The FAD-dependent monooxygenase ltmM then catalyzes the epoxidation of the two terminal alkenes of the geranylgeranyl moiety, which is subsequently cyclized by ltmB, to paspaline. The cytochrome P450 monooxygenases ltmQ and ltmP can sequentially oxidize paspaline to terpendole E and terpendole F. Alternatively, ltmP converts paspaline to an intermediate which is oxidized by ltmQ to terpendole F. LtmF, ltmK, ltmE and ltmJ appear to be unique to the epichloe endophytes. The prenyltransferase ltmF is involved in the 27-hydroxyl-O-prenylation. The cytochrome P450 monooxygenase ltmK is required for the oxidative acetal ring formation. The multi-functional prenyltransferase ltmE is required for C20- and C21-prenylations of the indole ring of paspalanes and acts together with the cytochrome P450 monooxygenase ltmJ to yield lolitremanes by multiple oxidations and ring closures. The stereoisomer pairs of lolitriol and lolitrem N or lolitrem B and lolitrem F may be attributed to variations in the way in which ring closure can occur under the action of ltmJ. While the major product of this pathway is lolitrem B, the prenyl transferases and cytochrome P450 monooxygenases identified in this pathway have a remarkable versatility in their regio- and stereo-specificities to generate a diverse range of metabolites that are products of a metabolic grid rather than a linear pathway. The protein is Geranylgeranyl pyrophosphate synthase ltmG of Epichloe festucae (strain Fl1).